The sequence spans 285 residues: MGQKIHPTGFRLPVTRNWSSRWYANNRNFAGMLAEDIEVREFLKKKLKNAAVSRVTIERPAKNARITIYSARPGVVIGKKGEDIENLKLELAKMLKVPVAVNIEEVRKPEVDAQLIAESITQQLEKRIMFRRAMKRAMQNAMRLGAQGIKIMSAGRLNGIEIARTEWYREGRVPLHTLRADIDYGTAEAKTTYGVIGVKVWVYRGDRLANGDAPVMRGEDRPEDDRRRRNPRGDRPGDRRGPGAGRGGPGAGRGPADGASAAPSGDAKPGVKRVVRAAPPAAKGE.

The KH type-2 domain occupies 39–107 (VREFLKKKLK…PVAVNIEEVR (69 aa)). Residues 211–285 (GDAPVMRGED…RAAPPAAKGE (75 aa)) are disordered. Positions 217–241 (RGEDRPEDDRRRRNPRGDRPGDRRG) are enriched in basic and acidic residues. Over residues 242 to 255 (PGAGRGGPGAGRGP) the composition is skewed to gly residues. Low complexity-rich tracts occupy residues 256 to 267 (ADGASAAPSGDA) and 276 to 285 (RAAPPAAKGE).

Belongs to the universal ribosomal protein uS3 family. Part of the 30S ribosomal subunit. Forms a tight complex with proteins S10 and S14.

Its function is as follows. Binds the lower part of the 30S subunit head. Binds mRNA in the 70S ribosome, positioning it for translation. This chain is Small ribosomal subunit protein uS3, found in Leptothrix cholodnii (strain ATCC 51168 / LMG 8142 / SP-6) (Leptothrix discophora (strain SP-6)).